The sequence spans 727 residues: METYEHVGNLQVATKLITFIEQRALPGTGIKKDDFWSGVQQIITELMPENKMLLAKREEIQATIDAWHQKNKGPIDFSAYHSFLEEIGYLEPIPEHVTITTENVDDEIAAQAGPQLVVPVNNARYAINAANARWGSLYDALYGSNVISEEDGCEKTGTYNPKRGTKVIQFAKDFLDHTFPLTSGSHHEAINYAIMDKQLVVTLESGKMTRLKDETQFVGYQGSQGDPSVILLLHHGLHVEIQIDARHPIGKSDRAKVKDIVLESALTTIMDCEDSVAAVDAEDKVAVYQNWLGLMKGTLEATFTKEGKTKKRKLNEDRSYTAPNGETFSLPGRSLMFVRNVGHLMTTPVIRTQSGEEVPEGILDGIVTSLIAKHDLLQNGTFRNSKKGSVYIVKPKMHGSEEVAFANRLFNRIEDILGLERHTLKIGVMDEERRTSLNLKACIEKVKERVVFINTGFLDRTGDEIHTSMEAGPMIRKGDMKSSSWLSAYERSNVAAGLTCGFQGRAQIGKGMWAMPDLMNEMMEQKGTQLEAGANTAWVPSPTAATLHAIHYHRHHVPAIQKTLADDQTCYRKEILEIPLAGSTDWTNEDIQAELNNNAQGILGYVVRWVEQGIGCSKVPDIHNTALMEDRATLRISSQHMANWLRHGIVSKEQVIRTMERMAKVVDEQNAGDPAYRPMADNLEQSVAFQAALELVLKGTEQPSGYTEPILHRRRLEFKQKIAKELV.

Acetyl-CoA-binding positions include Val117, 124–125 (RY), Ser275, and Arg312. Residue Arg339 is the Proton acceptor of the active site. Residues Arg339, Glu431, and 456–459 (GFLD) contribute to the glyoxylate site. The Mg(2+) site is built by Glu431 and Asp459. Pro540 contacts acetyl-CoA. Position 616 is a cysteine sulfenic acid (-SOH) (Cys616). Asp630 serves as the catalytic Proton donor.

This sequence belongs to the malate synthase family. GlcB subfamily. In terms of assembly, monomer. Requires Mg(2+) as cofactor.

It is found in the cytoplasm. The enzyme catalyses glyoxylate + acetyl-CoA + H2O = (S)-malate + CoA + H(+). Its pathway is carbohydrate metabolism; glyoxylate cycle; (S)-malate from isocitrate: step 2/2. In terms of biological role, involved in the glycolate utilization. Catalyzes the condensation and subsequent hydrolysis of acetyl-coenzyme A (acetyl-CoA) and glyoxylate to form malate and CoA. In Halalkalibacterium halodurans (strain ATCC BAA-125 / DSM 18197 / FERM 7344 / JCM 9153 / C-125) (Bacillus halodurans), this protein is Malate synthase G.